The chain runs to 824 residues: Disintegrin and metalloproteinase domain-containing protein 17 (824 aa).

The signal sequence occupies residues 1–17 (MRQSLLFLTSVVPFVLA). Positions 18-214 (PRPPDDPGFG…PEELVHRVKR (197 aa)) are excised as a propeptide. N-linked (GlcNAc...) asparagine glycosylation is found at Asn103, Asn157, and Asn174. A Cysteine switch motif is present at residues 182 to 189 (KVCGYLKV). A Zn(2+)-binding site is contributed by Cys184. Residues 215–671 (RADPDPMKNT…NTFGKFLADN (457 aa)) lie on the Extracellular side of the membrane. A Peptidase M12B domain is found at 223 to 474 (NTCKLLVVAD…KAQECFQERS (252 aa)). Cystine bridges form between Cys225–Cys333, Cys365–Cys469, and Cys423–Cys453. The N-linked (GlcNAc...) asparagine glycan is linked to Asn264. A Zn(2+)-binding site is contributed by His405. The active site involves Glu406. Zn(2+) is bound by residues His409 and His415. Residues Asn452, Asn498, Asn539, and Asn551 are each glycosylated (N-linked (GlcNAc...) asparagine). Residues 475 to 563 (NKVCGNSRVD…ECPPPGNAED (89 aa)) enclose the Disintegrin domain. 4 disulfide bridges follow: Cys534-Cys555, Cys573-Cys582, Cys578-Cys591, and Cys593-Cys600. Residue Asn594 is glycosylated (N-linked (GlcNAc...) asparagine). Positions 603 to 671 (CCRDLSGRCV…NTFGKFLADN (69 aa)) are crambin-like. Residues 672–692 (IVGSVLVFSLIFWIPFSILVH) form a helical membrane-spanning segment. Residues 693–824 (CVDKKLDKQY…NRVDSKETEC (132 aa)) lie on the Cytoplasmic side of the membrane. Short sequence motifs (SH3-binding) lie at residues 731-738 (PAPQTPGR) and 741-748 (PAPVIPSA). The disordered stretch occupies residues 732–824 (APQTPGRLQP…NRVDSKETEC (93 aa)). Residue Thr735 is modified to Phosphothreonine; by MAPK14. The segment covering 741-752 (PAPVIPSAPAAP) has biased composition (low complexity). Thr761 carries the post-translational modification Phosphothreonine. At Ser767 the chain carries Phosphoserine. Composition is skewed to basic and acidic residues over residues 768–781 (TDSH…EKDP), 791–807 (SFED…EKAA), and 815–824 (NRVDSKETEC). Phosphoserine is present on residues Ser791 and Ser819.

Interacts with MAD2L1, MAPK14 and MUC1. Interacts with iRhom1/RHBDF1 and iRhom2/RHBDF2. Interacts with FRMD8 via its interaction with iRhom1/RHBDF1 and iRhom2/RHBDF2. Interacts with TSPAN8. Requires Zn(2+) as cofactor. Post-translationally, the precursor is cleaved by a furin endopeptidase. Phosphorylated. Stimulation by growth factor or phorbol 12-myristate 13-acetate induces phosphorylation of Ser-819 but decreases phosphorylation of Ser-791. Phosphorylation at Thr-735 by MAPK14 is required for ADAM17-mediated ectodomain shedding. Ubiquitously expressed. Expressed at highest levels in adult heart, placenta, skeletal muscle, pancreas, spleen, thymus, prostate, testes, ovary and small intestine, and in fetal brain, lung, liver and kidney. Expressed in natural killer cells (at protein level).

It is found in the cell membrane. It carries out the reaction Narrow endopeptidase specificity. Cleaves Pro-Leu-Ala-Gln-Ala-|-Val-Arg-Ser-Ser-Ser in the membrane-bound, 26-kDa form of tumor necrosis factor alpha (TNFalpha). Similarly cleaves other membrane-anchored, cell-surface proteins to 'shed' the extracellular domains.. In terms of biological role, transmembrane metalloprotease which mediates the ectodomain shedding of a myriad of transmembrane proteins including adhesion proteins, growth factor precursors and cytokines important for inflammation and immunity. Cleaves the membrane-bound precursor of TNF-alpha to its mature soluble form. Responsible for the proteolytical release of soluble JAM3 from endothelial cells surface. Responsible for the proteolytic release of several other cell-surface proteins, including p75 TNF-receptor, interleukin 1 receptor type II, p55 TNF-receptor, transforming growth factor-alpha, L-selectin, growth hormone receptor, MUC1 and the amyloid precursor protein. Acts as an activator of Notch pathway by mediating cleavage of Notch, generating the membrane-associated intermediate fragment called Notch extracellular truncation (NEXT). Plays a role in the proteolytic processing of ACE2. Plays a role in hemostasis through shedding of GP1BA, the platelet glycoprotein Ib alpha chain. Mediates the proteolytic cleavage of LAG3, leading to release the secreted form of LAG3. Mediates the proteolytic cleavage of IL6R, leading to the release of secreted form of IL6R. Mediates the proteolytic cleavage and shedding of FCGR3A upon NK cell stimulation, a mechanism that allows for increased NK cell motility and detachment from opsonized target cells. Cleaves TREM2, resulting in shedding of the TREM2 ectodomain. The chain is Disintegrin and metalloproteinase domain-containing protein 17 from Homo sapiens (Human).